Consider the following 104-residue polypeptide: uncharacterized protein (104 aa).

The protein to M.jannaschii MJ1511.

This is an uncharacterized protein from Methanocaldococcus jannaschii (strain ATCC 43067 / DSM 2661 / JAL-1 / JCM 10045 / NBRC 100440) (Methanococcus jannaschii).